Consider the following 274-residue polypeptide: MLNVQLKIFCHAALIFLEVVYLFEPNLIYGVKKREKKSRSDSINHIIIKIKNGDIELKEKFIKKYKPYLLKIISSTLGRYVDPEVSEEYSVGLMAFNEAIDGFNPEINGNFTNYCNMVVNHRIIDYIRKNKKYSNVIPFSYFEERNDFEEKYLVSDSHYLYENIEVKEEILQFEQQLKQFGITLEDLVMNSPKHKDSRELCISIARILSENDKLFEKMIRKKCIPLSELMGLVNVHRKTVERNRKFIIAVSLILRSGLDEIKQFFRASEERREK.

The Polymerase core binding motif lies at 87 to 100; that stretch reads EEYSVGLMAFNEAI. Residues 226-245 constitute a DNA-binding region (H-T-H motif); that stretch reads LSELMGLVNVHRKTVERNRK.

Belongs to the sigma-70 factor family. SigI subfamily. In terms of assembly, interacts with RsgI4.

Its subcellular location is the cytoplasm. Negatively regulated by the anti-sigma-I factor RsgI4. Binding of the polysaccharide substrate to RsgI4 may lead to the release and activation of SigI4. Functionally, sigma factors are initiation factors that promote the attachment of RNA polymerase to specific initiation sites and are then released. This sigma factor is involved in regulation of cellulosomal genes via an external polysaccharide-sensing mechanism. In Acetivibrio thermocellus (strain ATCC 27405 / DSM 1237 / JCM 9322 / NBRC 103400 / NCIMB 10682 / NRRL B-4536 / VPI 7372) (Clostridium thermocellum), this protein is RNA polymerase sigma factor SigI4.